A 192-amino-acid chain; its full sequence is Fe/S biogenesis protein NfuA (192 aa).

[4Fe-4S] cluster-binding residues include C149 and C152.

This sequence belongs to the NfuA family. In terms of assembly, homodimer. [4Fe-4S] cluster serves as cofactor.

Involved in iron-sulfur cluster biogenesis. Binds a 4Fe-4S cluster, can transfer this cluster to apoproteins, and thereby intervenes in the maturation of Fe/S proteins. Could also act as a scaffold/chaperone for damaged Fe/S proteins. The sequence is that of Fe/S biogenesis protein NfuA from Proteus mirabilis (strain HI4320).